We begin with the raw amino-acid sequence, 444 residues long: Probable kynurenine--oxoglutarate transaminase BNA3 (444 aa).

At lysine 271 the chain carries N6-(pyridoxal phosphate)lysine.

Belongs to the class-I pyridoxal-phosphate-dependent aminotransferase family. Homodimer. Pyridoxal 5'-phosphate is required as a cofactor.

The protein localises to the cytoplasm. The protein resides in the mitochondrion. It carries out the reaction L-kynurenine + 2-oxoglutarate = kynurenate + L-glutamate + H2O. The protein operates within amino-acid degradation; L-kynurenine degradation; kynurenate from L-kynurenine: step 1/2. Functionally, catalyzes the irreversible transamination of the L-tryptophan metabolite L-kynurenine to form kynurenic acid (KA). The protein is Probable kynurenine--oxoglutarate transaminase BNA3 (BNA3) of Saccharomyces cerevisiae (strain ATCC 204508 / S288c) (Baker's yeast).